We begin with the raw amino-acid sequence, 313 residues long: NAD-capped RNA hydrolase NudC (313 aa).

R111 contacts substrate. The Nudix hydrolase domain occupies 168–293 (PRIDPAVICL…DWSSASESKL (126 aa)). A divalent metal cation is bound by residues A202, E218, and E222. Residues 203-224 (GFVEAGESFEVCVAREIREEIG) carry the Nudix box motif. Residue 236-243 (QPWPFPRS) participates in substrate binding. Residue E264 participates in a divalent metal cation binding.

It belongs to the Nudix hydrolase family. NudC subfamily. In terms of assembly, homodimer. Requires Mg(2+) as cofactor. Mn(2+) serves as cofactor.

The catalysed reaction is a 5'-end NAD(+)-phospho-ribonucleoside in mRNA + H2O = a 5'-end phospho-adenosine-phospho-ribonucleoside in mRNA + beta-nicotinamide D-ribonucleotide + 2 H(+). It catalyses the reaction NAD(+) + H2O = beta-nicotinamide D-ribonucleotide + AMP + 2 H(+). The enzyme catalyses NADH + H2O = reduced beta-nicotinamide D-ribonucleotide + AMP + 2 H(+). MRNA decapping enzyme that specifically removes the nicotinamide adenine dinucleotide (NAD) cap from a subset of mRNAs by hydrolyzing the diphosphate linkage to produce nicotinamide mononucleotide (NMN) and 5' monophosphate mRNA. The NAD-cap is present at the 5'-end of some mRNAs and stabilizes RNA against 5'-processing. Has preference for mRNAs with a 5'-end purine. Catalyzes the hydrolysis of a broad range of dinucleotide pyrophosphates. In Mycobacterium bovis (strain ATCC BAA-935 / AF2122/97), this protein is NAD-capped RNA hydrolase NudC.